The primary structure comprises 169 residues: Methane monooxygenase component A gamma chain (169 aa).

In terms of assembly, m.trichosporium has two forms of methane monooxygenase, a soluble and a membrane-bound type. The soluble type consists of four components (A to D): protein A, comprising three chains, in an alpha-2, beta-2, gamma-2 configuration, is a nonheme iron protein containing an unusual mu-hydroxo bridge structure at its active site and interacts with both oxygen and methane.

The catalysed reaction is methane + NADH + O2 + H(+) = methanol + NAD(+) + H2O. It catalyses the reaction methane + NADPH + O2 + H(+) = methanol + NADP(+) + H2O. Its function is as follows. Responsible for the initial oxygenation of methane to methanol in methanotrophs. It also catalyzes the monohydroxylation of a variety of unactivated alkenes, alicyclic, aromatic and heterocyclic compounds. This is Methane monooxygenase component A gamma chain (mmoZ) from Methylosinus trichosporium.